The chain runs to 342 residues: Glucokinase (342 aa).

7–12 (GDIGGT) lines the ATP pocket.

Belongs to the bacterial glucokinase family.

The protein resides in the cytoplasm. The enzyme catalyses D-glucose + ATP = D-glucose 6-phosphate + ADP + H(+). This Nostoc sp. (strain PCC 7120 / SAG 25.82 / UTEX 2576) protein is Glucokinase.